A 334-amino-acid polypeptide reads, in one-letter code: Glycerol-3-phosphate dehydrogenase [NAD(P)+] (334 aa).

NADPH-binding residues include S14, Y15, R35, and K109. K109, G138, and T140 together coordinate sn-glycerol 3-phosphate. Residue A142 coordinates NADPH. Sn-glycerol 3-phosphate contacts are provided by K194, D247, S257, R258, and N259. Catalysis depends on K194, which acts as the Proton acceptor. Residue R258 coordinates NADPH. Residues V282 and E284 each contribute to the NADPH site.

Belongs to the NAD-dependent glycerol-3-phosphate dehydrogenase family.

The protein resides in the cytoplasm. The enzyme catalyses sn-glycerol 3-phosphate + NAD(+) = dihydroxyacetone phosphate + NADH + H(+). The catalysed reaction is sn-glycerol 3-phosphate + NADP(+) = dihydroxyacetone phosphate + NADPH + H(+). The protein operates within membrane lipid metabolism; glycerophospholipid metabolism. Functionally, catalyzes the reduction of the glycolytic intermediate dihydroxyacetone phosphate (DHAP) to sn-glycerol 3-phosphate (G3P), the key precursor for phospholipid synthesis. This is Glycerol-3-phosphate dehydrogenase [NAD(P)+] from Colwellia psychrerythraea (strain 34H / ATCC BAA-681) (Vibrio psychroerythus).